The chain runs to 211 residues: Protein-methionine-sulfoxide reductase heme-binding subunit MsrQ (211 aa).

The next 6 helical transmembrane spans lie at 8–28, 54–74, 82–102, 116–136, 153–173, and 178–198; these read VIWL…WLVW, FLLA…PLLI, LWCF…ELGV, PYLT…FTST, FVYL…KIIS, and IYAG…LSLF.

It belongs to the MsrQ family. As to quaternary structure, heterodimer of a catalytic subunit (MsrP) and a heme-binding subunit (MsrQ). The cofactor is FMN. It depends on heme b as a cofactor.

Its subcellular location is the cell inner membrane. In terms of biological role, part of the MsrPQ system that repairs oxidized periplasmic proteins containing methionine sulfoxide residues (Met-O), using respiratory chain electrons. Thus protects these proteins from oxidative-stress damage caused by reactive species of oxygen and chlorine generated by the host defense mechanisms. MsrPQ is essential for the maintenance of envelope integrity under bleach stress, rescuing a wide series of structurally unrelated periplasmic proteins from methionine oxidation, including the primary periplasmic chaperone SurA and the lipoprotein Pal. MsrQ provides electrons for reduction to the reductase catalytic subunit MsrP, using the quinone pool of the respiratory chain. The protein is Protein-methionine-sulfoxide reductase heme-binding subunit MsrQ of Shigella flexneri.